We begin with the raw amino-acid sequence, 309 residues long: MSAGQLRRHEIGKVTALTNPLSGHGAAVKAAHGAIARLKHRGVDVVEIVGGDAHDARHLLAAAVAKGTDAVMVTGGDGVVSNALQVLAGTDIPLGIIPAGTGNDHAREFGLPTKNPKAAADIVVDGWTETIDLGRIQDDNGIEKWFGTVAATGFDSLVNDRANRMRWPHGRMRYYIAMLAELSRLRPLPFRLVLDGTEEIVADLTLADFGNTRSYGGGLLICPNADHSDGLLDITMAQSDSRTKLLRLFPTIFKGAHVELDEVSTTRAKTVHVECPGINVYADGDFACPLPAEISAVPAALQVLRPRHG.

In terms of domain architecture, DAGKc spans 9–140 (HEIGKVTALT…IDLGRIQDDN (132 aa)). ATP is bound by residues 19–23 (NPLSG), 76–82 (GDGVVSN), and Thr101. Asp226, Asp229, and Leu231 together coordinate Mg(2+). Asp285 (proton acceptor) is an active-site residue.

This sequence belongs to the diacylglycerol/lipid kinase family. It depends on Mg(2+) as a cofactor.

Its subcellular location is the secreted. The protein resides in the cell wall. It carries out the reaction a 1,2-diacyl-sn-glycerol + ATP = a 1,2-diacyl-sn-glycero-3-phosphate + ADP + H(+). The catalysed reaction is N-hexadecanoylsphing-4-enine + ATP = N-(hexadecanoyl)-sphing-4-enine-1-phosphate + ADP + H(+). Functionally, catalyzes the phosphorylation of diacylglycerol (DAG) into phosphatidic acid. Is involved in the biosynthesis of phosphatidylinositol mannosides (PIMs), probably via a role in the biosynthesis of phosphatidylinositol (PI), a PIM precursor, which is derived from phosphatidic acid. Is also able to phosphorylate other various amphipathic lipids of host and bacterial origin in vitro, such as ceramide. This is Diacylglycerol kinase (dagK) from Mycobacterium tuberculosis (strain CDC 1551 / Oshkosh).